Here is a 529-residue protein sequence, read N- to C-terminus: Bifunctional purine biosynthesis protein PurH (529 aa).

Positions 2 to 149 (TDLHPVRRAL…KNHAFVNVVV (148 aa)) constitute an MGS-like domain.

It belongs to the PurH family.

It catalyses the reaction (6R)-10-formyltetrahydrofolate + 5-amino-1-(5-phospho-beta-D-ribosyl)imidazole-4-carboxamide = 5-formamido-1-(5-phospho-D-ribosyl)imidazole-4-carboxamide + (6S)-5,6,7,8-tetrahydrofolate. The catalysed reaction is IMP + H2O = 5-formamido-1-(5-phospho-D-ribosyl)imidazole-4-carboxamide. It functions in the pathway purine metabolism; IMP biosynthesis via de novo pathway; 5-formamido-1-(5-phospho-D-ribosyl)imidazole-4-carboxamide from 5-amino-1-(5-phospho-D-ribosyl)imidazole-4-carboxamide (10-formyl THF route): step 1/1. It participates in purine metabolism; IMP biosynthesis via de novo pathway; IMP from 5-formamido-1-(5-phospho-D-ribosyl)imidazole-4-carboxamide: step 1/1. This chain is Bifunctional purine biosynthesis protein PurH, found in Ruegeria sp. (strain TM1040) (Silicibacter sp.).